The following is a 597-amino-acid chain: Mediator of RNA polymerase II transcription subunit 26 (597 aa).

Residues 10-87 enclose the TFIIS N-terminal domain; that stretch reads EIRERLLQAI…RNWQKLIEPV (78 aa). 3 disordered regions span residues 96 to 236, 254 to 418, and 436 to 459; these read GIPN…VKHP, LDDA…ARVK, and TLKDPAQVESSAPTEQHRTETDKQ. Basic and acidic residues predominate over residues 128-147; that stretch reads QELKGRNDIQKAHSPKADKT. Residues 226–236 are compositionally biased toward polar residues; that stretch reads HTNSPGLVKHP. Low complexity predominate over residues 262–273; it reads PRSPRCSSFSPR. Positions 321–338 are enriched in basic and acidic residues; the sequence is KRLESPRQDRVSSPHKPV. Residues 341–377 show a composition bias toward polar residues; sequence LPSTDCHQVLPRTSQQHIPRSSLVDSQTPRTGFSPES. Basic and acidic residues predominate over residues 450–459; sequence EQHRTETDKQ.

This sequence belongs to the Mediator complex subunit 26 family. In terms of assembly, component of the Mediator complex.

The protein resides in the nucleus. In terms of biological role, component of the Mediator complex, a coactivator involved in the regulated transcription of nearly all RNA polymerase II-dependent genes. Mediator functions as a bridge to convey information from gene-specific regulatory proteins to the basal RNA polymerase II transcription machinery. Mediator is recruited to promoters by direct interactions with regulatory proteins and serves as a scaffold for the assembly of a functional preinitiation complex with RNA polymerase II and the general transcription factors. The sequence is that of Mediator of RNA polymerase II transcription subunit 26 (med26) from Xenopus laevis (African clawed frog).